A 133-amino-acid chain; its full sequence is Small ribosomal subunit protein uS9 (133 aa).

The segment at 114-133 (VERKKYGKKKARRSPQFSKR) is disordered. Residues 118–133 (KYGKKKARRSPQFSKR) show a composition bias toward basic residues.

Belongs to the universal ribosomal protein uS9 family.

This Fusobacterium nucleatum subsp. nucleatum (strain ATCC 25586 / DSM 15643 / BCRC 10681 / CIP 101130 / JCM 8532 / KCTC 2640 / LMG 13131 / VPI 4355) protein is Small ribosomal subunit protein uS9.